Here is a 556-residue protein sequence, read N- to C-terminus: Formate--tetrahydrofolate ligase 1 (556 aa).

65–72 (TPAGEGKS) is a binding site for ATP.

Belongs to the formate--tetrahydrofolate ligase family.

The enzyme catalyses (6S)-5,6,7,8-tetrahydrofolate + formate + ATP = (6R)-10-formyltetrahydrofolate + ADP + phosphate. The protein operates within one-carbon metabolism; tetrahydrofolate interconversion. The protein is Formate--tetrahydrofolate ligase 1 of Streptococcus pyogenes serotype M2 (strain MGAS10270).